We begin with the raw amino-acid sequence, 138 residues long: 10 kDa chaperonin 1, chloroplastic (138 aa).

The transit peptide at 1-61 directs the protein to the chloroplast; the sequence is MASSFITVPK…VPQADRVLVR (61 aa). A cpn-10 domain region spans residues 50–137; sequence KVVPQADRVL…CKESDLLAIV (88 aa).

The protein belongs to the GroES chaperonin family. As to expression, expressed at low levels in germinating seeds, seedlings, rosettes leaves, flowers and siliques.

It is found in the plastid. It localises to the chloroplast. In terms of biological role, functions as a co-chaperone for protein folding in chloroplasts. The protein is 10 kDa chaperonin 1, chloroplastic of Arabidopsis thaliana (Mouse-ear cress).